A 476-amino-acid chain; its full sequence is Glutamate--tRNA ligase (476 aa).

The 'HIGH' region signature appears at 9–19; the sequence is PSPTGLFHIGT. Positions 248–252 match the 'KMSKS' region motif; the sequence is KLSKR. K251 lines the ATP pocket.

Belongs to the class-I aminoacyl-tRNA synthetase family. Glutamate--tRNA ligase type 1 subfamily. Monomer.

The protein resides in the cytoplasm. It carries out the reaction tRNA(Glu) + L-glutamate + ATP = L-glutamyl-tRNA(Glu) + AMP + diphosphate. Its function is as follows. Catalyzes the attachment of glutamate to tRNA(Glu) in a two-step reaction: glutamate is first activated by ATP to form Glu-AMP and then transferred to the acceptor end of tRNA(Glu). The chain is Glutamate--tRNA ligase from Prochlorococcus marinus (strain AS9601).